The following is a 293-amino-acid chain: uncharacterized protein (293 aa).

The active site involves Glu47.

The protein belongs to the PhzF family.

This is an uncharacterized protein from Bacillus subtilis (strain 168).